The following is a 385-amino-acid chain: 8-amino-7-oxononanoate synthase (385 aa).

Arginine 21 provides a ligand contact to substrate. Residue 108–109 (GF) participates in pyridoxal 5'-phosphate binding. Histidine 133 serves as a coordination point for substrate. Residues serine 179, histidine 207, and threonine 233 each contribute to the pyridoxal 5'-phosphate site. Residue lysine 236 is modified to N6-(pyridoxal phosphate)lysine. Position 352 (threonine 352) interacts with substrate.

It belongs to the class-II pyridoxal-phosphate-dependent aminotransferase family. BioF subfamily. In terms of assembly, homodimer. Pyridoxal 5'-phosphate is required as a cofactor.

The enzyme catalyses 6-carboxyhexanoyl-[ACP] + L-alanine + H(+) = (8S)-8-amino-7-oxononanoate + holo-[ACP] + CO2. Its pathway is cofactor biosynthesis; biotin biosynthesis. Catalyzes the decarboxylative condensation of pimeloyl-[acyl-carrier protein] and L-alanine to produce 8-amino-7-oxononanoate (AON), [acyl-carrier protein], and carbon dioxide. This chain is 8-amino-7-oxononanoate synthase, found in Salmonella paratyphi A (strain ATCC 9150 / SARB42).